The sequence spans 410 residues: Platelet-activating factor acetylhydrolase IB subunit alpha (410 aa).

Residues 1–38 (MVLSQRQRDELNRAIADYLRSNGYEEAYSVFKKEAELD) are required for self-association and interaction with PAFAH1B2 and PAFAH1B3. The tract at residues 1–66 (MVLSQRQRDE…SVIRLQKKVM (66 aa)) is interaction with NDE1. Residues 1–102 (MVLSQRQRDE…EWIPRPPEKY (102 aa)) form an interaction with NDEL1 region. The LisH domain occupies 7 to 39 (QRDELNRAIADYLRSNGYEEAYSVFKKEAELDM). The residue at position 53 (K53) is an N6-acetyllysine. Residues 56 to 82 (TSVIRLQKKVMELESKLNEAKEEFTSG) are a coiled coil. The interaction with dynein and dynactin stretch occupies residues 83–410 (GPLGQKRDPK…DQTVKVWECR (328 aa)). 7 WD repeats span residues 106-147 (GHRS…RTLK), 148-187 (GHTDSVQDISFDHSGKLLASCSADMTIKLWDFQGFECIRT), 190-229 (GHDHNVSSVAIMPNGDHIVSASRDKTIKMWEVQTGYCVKT), 232-271 (GHREWVRMVRPNQDGTLIASCSNDQTVRVWVVATKECKAE), 274-333 (EHEH…CLMT), 336-377 (GHDN…KTLN), and 379-410 (HEHFVTSLDFHKTAPYVVTGFVDQTVKVWECR). The residue at position 109 (S109) is a Phosphoserine. The interaction with DCX stretch occupies residues 367 to 409 (YKNKRCMKTLNAHEHFVTSLDFHKTAPYVVTGFVDQTVKVWEC). The interval 388–410 (FHKTAPYVVTGFVDQTVKVWECR) is interaction with NDEL1.

Belongs to the WD repeat LIS1/nudF family. In terms of assembly, can self-associate. Component of the cytosolic PAF-AH (I) heterotetrameric enzyme, which is composed of PAFAH1B1 (beta), PAFAH1B2 (alpha2) and PAFAH1B3 (alpha1) subunits. The catalytic activity of the enzyme resides in the alpha1 (PAFAH1B3) and alpha2 (PAFAH1B2) subunits, whereas the beta subunit (PAFAH1B1) has regulatory activity. Trimer formation is not essential for the catalytic activity. Interacts with the catalytic dimer of PAF-AH (I) heterotetrameric enzyme: interacts with PAFAH1B2 homodimer (alpha2/alpha2 homodimer), PAFAH1B3 homodimer (alpha1/alpha1 homodimer) and PAFAH1B2-PAFAH1B3 heterodimer (alpha2/alpha1 heterodimer). Interacts with DCX, dynein, dynactin, IQGAP1, KATNB1, NDE1, NDEL1, NUDC and RSN. Interacts with DISC1, and this interaction is enhanced by NDEL1. Interacts with DAB1 when DAB1 is phosphorylated in response to RELN/reelin signaling. Interacts with INTS13. Interacts with DCDC1.

Its subcellular location is the cytoplasm. The protein resides in the cytoskeleton. It is found in the microtubule organizing center. It localises to the centrosome. The protein localises to the spindle. Its subcellular location is the nucleus membrane. Regulatory subunit (beta subunit) of the cytosolic type I platelet-activating factor (PAF) acetylhydrolase (PAF-AH (I)), an enzyme that catalyzes the hydrolyze of the acetyl group at the sn-2 position of PAF and its analogs and participates in PAF inactivation. Regulates the PAF-AH (I) activity in a catalytic dimer composition-dependent manner. Positively regulates the activity of the minus-end directed microtubule motor protein dynein. May enhance dynein-mediated microtubule sliding by targeting dynein to the microtubule plus end. Required for several dynein- and microtubule-dependent processes such as the maintenance of Golgi integrity, the peripheral transport of microtubule fragments and the coupling of the nucleus and centrosome. Required during brain development for the proliferation of neuronal precursors and the migration of newly formed neurons from the ventricular/subventricular zone toward the cortical plate. Neuronal migration involves a process called nucleokinesis, whereby migrating cells extend an anterior process into which the nucleus subsequently translocates. During nucleokinesis dynein at the nuclear surface may translocate the nucleus towards the centrosome by exerting force on centrosomal microtubules. Also required for proper activation of Rho GTPases and actin polymerization at the leading edge of locomoting cerebellar neurons and postmigratory hippocampal neurons in response to calcium influx triggered via NMDA receptors. May also play a role in other forms of cell locomotion including the migration of fibroblasts during wound healing. Required for dynein recruitment to microtubule plus ends and BICD2-bound cargos. May modulate the Reelin pathway through interaction of the PAF-AH (I) catalytic dimer with VLDLR. This is Platelet-activating factor acetylhydrolase IB subunit alpha from Pan troglodytes (Chimpanzee).